Here is a 275-residue protein sequence, read N- to C-terminus: Thiazole synthase (275 aa).

The active-site Schiff-base intermediate with DXP is Lys-116. Residues Gly-177, 203–204, and 225–226 contribute to the 1-deoxy-D-xylulose 5-phosphate site; these read AG and NT.

It belongs to the ThiG family. Homotetramer. Forms heterodimers with either ThiH or ThiS.

Its subcellular location is the cytoplasm. The enzyme catalyses [ThiS sulfur-carrier protein]-C-terminal-Gly-aminoethanethioate + 2-iminoacetate + 1-deoxy-D-xylulose 5-phosphate = [ThiS sulfur-carrier protein]-C-terminal Gly-Gly + 2-[(2R,5Z)-2-carboxy-4-methylthiazol-5(2H)-ylidene]ethyl phosphate + 2 H2O + H(+). It functions in the pathway cofactor biosynthesis; thiamine diphosphate biosynthesis. In terms of biological role, catalyzes the rearrangement of 1-deoxy-D-xylulose 5-phosphate (DXP) to produce the thiazole phosphate moiety of thiamine. Sulfur is provided by the thiocarboxylate moiety of the carrier protein ThiS. In vitro, sulfur can be provided by H(2)S. This chain is Thiazole synthase, found in Acaryochloris marina (strain MBIC 11017).